The primary structure comprises 78 residues: MNIQETVLNILEDITGTDEVVNNQDIQLFEEGLLDSLATVQLLVEIEGQLGIQVPVSDFDREVWGTPKQIIQQVEALQ.

Positions 1-78 (MNIQETVLNI…QIIQQVEALQ (78 aa)) constitute a Carrier domain. Residue Ser36 is modified to O-(pantetheine 4'-phosphoryl)serine.

Belongs to the DltC family. 4'-phosphopantetheine is transferred from CoA to a specific serine of apo-DCP.

Its subcellular location is the cytoplasm. Its pathway is cell wall biogenesis; lipoteichoic acid biosynthesis. Functionally, carrier protein involved in the D-alanylation of lipoteichoic acid (LTA). The loading of thioester-linked D-alanine onto DltC is catalyzed by D-alanine--D-alanyl carrier protein ligase DltA. The DltC-carried D-alanyl group is further transferred to cell membrane phosphatidylglycerol (PG) by forming an ester bond, probably catalyzed by DltD. D-alanylation of LTA plays an important role in modulating the properties of the cell wall in Gram-positive bacteria, influencing the net charge of the cell wall. The protein is D-alanyl carrier protein of Enterococcus faecalis (strain ATCC 700802 / V583).